Here is a 344-residue protein sequence, read N- to C-terminus: Ras association domain-containing protein 1 (344 aa).

Position 2 is an N-acetylserine (serine 2). Serine 2 is modified (phosphoserine). The segment at 2 to 119 is mediates interaction with E4F1; that stretch reads SGEPELIELR…DLGWEPAVER (118 aa). Arginine 36 carries the post-translational modification Omega-N-methylarginine. A Phorbol-ester/DAG-type zinc finger spans residues 51 to 105; that stretch reads GHRFQPAGPATHTWCDLCGDFIWGVVRKGLQCARLSADCKFTCHYRCRALVCLDC. Residues 179–189 are compositionally biased toward low complexity; that stretch reads SVPSSKKPPSL. The disordered stretch occupies residues 179–203; it reads SVPSSKKPPSLQDARRGPGRGTSVR. Residues 198–292 enclose the Ras-associating domain; the sequence is RGTSVRRRTS…LSFVLKENDS (95 aa). The SARAH domain occupies 294–341; sequence EVNWDAFSMPELHNFLRILQREEEEHLRQILQKYSYCRQKIQEALHAC. The tract at residues 315 to 318 is MOAP1-binding; it reads EEEE.

As to quaternary structure, interacts with MAP1S. Interacts with XPA. Binds to the N-terminal of CDC20 during prometaphase. Binds to STK3/MST2 and STK4/MST1. Recruited to the TNFRSF1A and TNFRSF10A complexes in response to their respective cognate ligand, after internalization. Can self-associate. Part of a complex with MDM2, DAXX, RASSF1 and USP7. Interacts with ECM2. In terms of assembly, interacts with MOAP1. Interacts with E4F1. Interacts with RSSF5 and probably associates with HRAS via a RSSF1 isoform A-RSSF5 heterodimer. Interacts (via C-terminus) with DAXX (via N-terminus); the interaction is independent of MDM2 and TP53. Interacts (via N-terminus) with MDM2 (via C-terminus); the interaction is independent of TP53. Interacts with RAB39A. Interacts with RAB39B; the interaction is weak. Interacts (via N-terminus) with DAXX. Interacts with RAB39B; the interaction is strong. Does not interact with RAB39A. As to quaternary structure, interacts (via N-terminus) with DAXX. In terms of tissue distribution, isoform A and isoform C are ubiquitously expressed in all tissues tested, however isoform A is absent in many corresponding cancer cell lines. Isoform B is mainly expressed in hematopoietic cells.

It is found in the cytoplasm. The protein resides in the cytoskeleton. It localises to the microtubule organizing center. The protein localises to the centrosome. Its subcellular location is the spindle. It is found in the spindle pole. The protein resides in the nucleus. Potential tumor suppressor. Required for death receptor-dependent apoptosis. Mediates activation of STK3/MST2 and STK4/MST1 during Fas-induced apoptosis by preventing their dephosphorylation. When associated with MOAP1, promotes BAX conformational change and translocation to mitochondrial membranes in response to TNF and TNFSF10 stimulation. Isoform A interacts with CDC20, an activator of the anaphase-promoting complex, APC, resulting in the inhibition of APC activity and mitotic progression. Inhibits proliferation by negatively regulating cell cycle progression at the level of G1/S-phase transition by regulating accumulation of cyclin D1 protein. Isoform C has been shown not to perform these roles, no function has been identified for this isoform. Isoform A disrupts interactions among MDM2, DAXX and USP7, thus contributing to the efficient activation of TP53 by promoting MDM2 self-ubiquitination in cell-cycle checkpoint control in response to DNA damage. The protein is Ras association domain-containing protein 1 of Homo sapiens (Human).